The sequence spans 68 residues: Protein SlyX homolog (68 aa).

It belongs to the SlyX family.

The polypeptide is Protein SlyX homolog (Pseudomonas putida (strain ATCC 700007 / DSM 6899 / JCM 31910 / BCRC 17059 / LMG 24140 / F1)).